The following is a 228-amino-acid chain: Translin (228 aa).

Positions 86–90 (RFHEH) are DNA/RNA binding. The tract at residues 177–198 (LDSGFRLLNLKNDSLRKRYDGL) is leucine-zipper. An N6-acetyllysine modification is found at lysine 187. Position 190 is a phosphoserine (serine 190). Lysine 199 carries the N6-acetyllysine modification.

Belongs to the translin family. In terms of assembly, ring-shaped heterooctamer of six TSN and two TSNAX subunits, DNA/RNA binding occurs inside the ring.

It is found in the cytoplasm. Its subcellular location is the nucleus. In terms of biological role, DNA-binding protein that specifically recognizes consensus sequences at the breakpoint junctions in chromosomal translocations, mostly involving immunoglobulin (Ig)/T-cell receptor gene segments. Seems to recognize single-stranded DNA ends generated by staggered breaks occurring at recombination hot spots. Exhibits both single-stranded and double-stranded endoribonuclease activity. May act as an activator of RNA-induced silencing complex (RISC) by facilitating endonucleolytic cleavage of the siRNA passenger strand. The sequence is that of Translin (Tsn) from Mus musculus (Mouse).